The primary structure comprises 329 residues: Acetyl-coenzyme A carboxylase carboxyl transferase subunit alpha (329 aa).

Positions 40-294 (QLETLAARRR…KNALEKHLSE (255 aa)) constitute a CoA carboxyltransferase C-terminal domain.

It belongs to the AccA family. As to quaternary structure, acetyl-CoA carboxylase is a heterohexamer composed of biotin carboxyl carrier protein (AccB), biotin carboxylase (AccC) and two subunits each of ACCase subunit alpha (AccA) and ACCase subunit beta (AccD).

The protein localises to the cytoplasm. The catalysed reaction is N(6)-carboxybiotinyl-L-lysyl-[protein] + acetyl-CoA = N(6)-biotinyl-L-lysyl-[protein] + malonyl-CoA. Its pathway is lipid metabolism; malonyl-CoA biosynthesis; malonyl-CoA from acetyl-CoA: step 1/1. In terms of biological role, component of the acetyl coenzyme A carboxylase (ACC) complex. First, biotin carboxylase catalyzes the carboxylation of biotin on its carrier protein (BCCP) and then the CO(2) group is transferred by the carboxyltransferase to acetyl-CoA to form malonyl-CoA. This chain is Acetyl-coenzyme A carboxylase carboxyl transferase subunit alpha, found in Prochlorococcus marinus (strain NATL2A).